The following is a 229-amino-acid chain: Glutathione S-transferase 3 (229 aa).

A Blocked amino end (Ala) modification is found at Ala2. The 81-residue stretch at 3–83 (AKPVLYYFNG…YIAGKYNLYG (81 aa)) folds into the GST N-terminal domain. Glutathione-binding positions include Tyr9, 54-55 (QV), and 67-68 (QT). The 123-residue stretch at 85 to 207 (DLKERALIDM…LAPGSKRKPI (123 aa)) folds into the GST C-terminal domain.

It belongs to the GST superfamily. Alpha family. Homodimer or heterodimer (with a subunit from group CL-4).

It is found in the cytoplasm. The catalysed reaction is RX + glutathione = an S-substituted glutathione + a halide anion + H(+). Catalyzes the conjugation of GSH to a wide variety of electrophilic alkylating agents. Also involved in the metabolism of lipid hydroperoxides, prostaglandins and leukotriene A4 and in binding of non-substrate hydrophobic ligands such as bile acids, a number of drugs and thyroid hormones. This GST does not exhibit peroxidase activity. This chain is Glutathione S-transferase 3, found in Gallus gallus (Chicken).